The chain runs to 406 residues: HEAT repeat-containing taxis protein OE_2401F (406 aa).

7 HEAT repeats span residues 7 to 41 (LERSGDVEKLVELLQESEKETVRRRAAEILGNLDE), 42 to 78 (PEPEGIQALVDAMSDDDESVRAAAIDALTQQEAVDAL), 90 to 127 (GATWAQAEAFVENLESETPELRMAAANVLGLLGVEDTA), 153 to 184 (IEQPAVTGILVDCLHGEPLKVRREAAESLGRL), 185 to 215 (TTEQALDGLLSVVEDDSEAMRRTAVSSLGRF), 216 to 252 (ETAEPVDALVERLGDESDLVRRAAVFSLIEILSNVPP), and 370 to 406 (VGGDRSRQRLERLVDETDSEEVRRRAFSAISKLGGKT).

As to quaternary structure, interacts with chemotaxis (Che) proteins.

Functionally, involved in taxis signal transduction. Essential for the ability to control the direction of flagellar rotation. May have a role between CheY and the flagellum. The polypeptide is HEAT repeat-containing taxis protein OE_2401F (Halobacterium salinarum (strain ATCC 29341 / DSM 671 / R1)).